A 308-amino-acid chain; its full sequence is MASKSQILFIGGTGYIGKFIVEASAKAGYPTYVLVREASLSDPAKSKVIENFKALGVNFVLGDLYDHESLVKAIKQVDVVISTVGHGQLADQGKIIAAIKEAGNVKRFFPSEFGNDVDRSHAVEPAKSAFETKAKIRRAVEAEGIPYTYVSSNFFAGYFLPTLNQPGASSAPRDKVVILGDGNPKAIFNKEDDIGTYTIRAVDDPRTLNKVLYIRPPANTISFNELVSLWEKKIGKTLERIYVPEEQLLKNIQEAAVPLNVILSISHAVFVKGDHTNFEIEPSFGVEATALYPDVKYTTVDEYLNQFV.

NADP(+) contacts are provided by residues 11 to 17 (GGTGYIG), Arg36, and Lys45. Lys133 functions as the Proton acceptor in the catalytic mechanism. Residue Arg137 participates in NADP(+) binding.

This sequence belongs to the NmrA-type oxidoreductase family. Isoflavone reductase subfamily.

The catalysed reaction is (-)-dehydrodiconiferyl alcohol + NADPH + H(+) = (S)-isodihydrodehydrodiconiferyl alcohol + NADP(+). It catalyses the reaction (+)-dehydrodiconiferyl alcohol + NADPH + H(+) = (R)-isodihydrodehydrodiconiferyl alcohol + NADP(+). In terms of biological role, oxidoreductase involved in lignan biosynthesis. Catalyzes the NADPH-dependent reduction of phenylcoumaran benzylic ethers. Converts dehydrodiconiferyl alcohol (DDC) to isodihydrodehydrodiconiferyl alcohol (IDDDC). The sequence is that of Phenylcoumaran benzylic ether reductase Pyrc5 from Pyrus communis (Pear).